The primary structure comprises 422 residues: Probable isoprenylcysteine alpha-carbonyl methylesterase ICMEL2 (422 aa).

Over residues 1–16 the composition is skewed to basic and acidic residues; sequence MQLSPERCRPMSENRE. Residues 1-55 form a disordered region; it reads MQLSPERCRPMSENREAWSANSEEMELLHGSNRLSSPEHVRRRVSGNSSEDGSPR. 2 helical membrane passes run 97-117 and 152-172; these read LLALACYAMLLMPGFLQVAYL and VVVFVTGGAWIIGYKAWGSLL. Substrate-binding positions include 158–160 and 229–231; these read GGA and QSA. Catalysis depends on residues S230, D331, and H363.

Belongs to the AB hydrolase superfamily. Isoprenylcysteine methylesterase family. Expressed at low levels in flowers and siliques.

The protein resides in the endoplasmic reticulum membrane. The protein localises to the golgi apparatus membrane. The catalysed reaction is [protein]-C-terminal S-[(2E,6E)-farnesyl]-L-cysteine methyl ester + H2O = [protein]-C-terminal S-[(2E,6E)-farnesyl]-L-cysteine + methanol + H(+). In terms of biological role, catalyzes the demethylation of isoprenylcysteine methylesters. May act as a negative regulator of ABA signaling. In Arabidopsis thaliana (Mouse-ear cress), this protein is Probable isoprenylcysteine alpha-carbonyl methylesterase ICMEL2.